Here is a 515-residue protein sequence, read N- to C-terminus: Portal protein (515 aa).

It belongs to the podoviridae head-to-tail connector protein family. In terms of assembly, homododecamer.

It localises to the virion. Forms the portal vertex of the capsid. This portal plays critical roles in head assembly, genome packaging, neck/tail attachment, and genome ejection. The portal protein multimerizes as a single ring-shaped homododecamer arranged around a central channel. This is Portal protein from Salmonella typhimurium (Bacteriophage SP6).